A 142-amino-acid chain; its full sequence is Neuritin (142 aa).

An N-terminal signal peptide occupies residues methionine 1 to alanine 27. Glycine 116 carries the GPI-anchor amidated glycine lipid modification. Positions alanine 117 to phenylalanine 142 are cleaved as a propeptide — removed in mature form.

This sequence belongs to the neuritin family. As to quaternary structure, component of the outer core of AMPAR complex. AMPAR complex consists of an inner core made of 4 pore-forming GluA/GRIA proteins (GRIA1, GRIA2, GRIA3 and GRIA4) and 4 major auxiliary subunits arranged in a twofold symmetry. One of the two pairs of distinct binding sites is occupied either by CNIH2, CNIH3 or CACNG2, CACNG3. The other harbors CACNG2, CACNG3, CACNG4, CACNG8 or GSG1L. This inner core of AMPAR complex is complemented by outer core constituents binding directly to the GluA/GRIA proteins at sites distinct from the interaction sites of the inner core constituents. Outer core constituents include at least PRRT1, PRRT2, CKAMP44/SHISA9, FRRS1L and NRN1. The proteins of the inner and outer core serve as a platform for other, more peripherally associated AMPAR constituents. Alone or in combination, these auxiliary subunits control the gating and pharmacology of the AMPAR complex and profoundly impact their biogenesis and protein processing.

The protein localises to the cell membrane. It is found in the synapse. In terms of biological role, promotes neurite outgrowth and especially branching of neuritic processes in primary hippocampal and cortical cells. This is Neuritin (NRN1) from Bos taurus (Bovine).